A 179-amino-acid polypeptide reads, in one-letter code: Large ribosomal subunit protein uL5 (179 aa).

The protein belongs to the universal ribosomal protein uL5 family. As to quaternary structure, part of the 50S ribosomal subunit; part of the 5S rRNA/L5/L18/L25 subcomplex. Contacts the 5S rRNA and the P site tRNA. Forms a bridge to the 30S subunit in the 70S ribosome.

In terms of biological role, this is one of the proteins that bind and probably mediate the attachment of the 5S RNA into the large ribosomal subunit, where it forms part of the central protuberance. In the 70S ribosome it contacts protein S13 of the 30S subunit (bridge B1b), connecting the 2 subunits; this bridge is implicated in subunit movement. Contacts the P site tRNA; the 5S rRNA and some of its associated proteins might help stabilize positioning of ribosome-bound tRNAs. This Shewanella frigidimarina (strain NCIMB 400) protein is Large ribosomal subunit protein uL5.